A 271-amino-acid polypeptide reads, in one-letter code: ATP synthase subunit delta (271 aa).

The protein belongs to the ATPase delta chain family. As to quaternary structure, F-type ATPases have 2 components, F(1) - the catalytic core - and F(0) - the membrane proton channel. F(1) has five subunits: alpha(3), beta(3), gamma(1), delta(1), epsilon(1). F(0) has three main subunits: a(1), b(2) and c(10-14). The alpha and beta chains form an alternating ring which encloses part of the gamma chain. F(1) is attached to F(0) by a central stalk formed by the gamma and epsilon chains, while a peripheral stalk is formed by the delta and b chains.

It localises to the cell membrane. In terms of biological role, f(1)F(0) ATP synthase produces ATP from ADP in the presence of a proton or sodium gradient. F-type ATPases consist of two structural domains, F(1) containing the extramembraneous catalytic core and F(0) containing the membrane proton channel, linked together by a central stalk and a peripheral stalk. During catalysis, ATP synthesis in the catalytic domain of F(1) is coupled via a rotary mechanism of the central stalk subunits to proton translocation. This protein is part of the stalk that links CF(0) to CF(1). It either transmits conformational changes from CF(0) to CF(1) or is implicated in proton conduction. This Streptomyces griseus subsp. griseus (strain JCM 4626 / CBS 651.72 / NBRC 13350 / KCC S-0626 / ISP 5235) protein is ATP synthase subunit delta.